A 477-amino-acid polypeptide reads, in one-letter code: Histidine--tRNA ligase (477 aa).

The protein belongs to the class-II aminoacyl-tRNA synthetase family. In terms of assembly, homodimer.

It is found in the cytoplasm. It carries out the reaction tRNA(His) + L-histidine + ATP = L-histidyl-tRNA(His) + AMP + diphosphate + H(+). This is Histidine--tRNA ligase (hisS) from Xanthomonas campestris pv. campestris (strain ATCC 33913 / DSM 3586 / NCPPB 528 / LMG 568 / P 25).